The primary structure comprises 196 residues: MEVILLERVAKLGQMGEIVKVKDGFARNFLLKRKKALRATAENKAKYEGMKAELEANNIKAKGEAAKVAEKIDGRDIVVIRQASESGQLFGSVSVRDIVDALAADGITVSRPQVWLDAPIKTIGQQKVTIAIHPEVETSVTVTVARSADEAERIKRGEDISTRQEDRDAAAEAIAAAGEFFDPEAQEEAAGEPAAQ.

This sequence belongs to the bacterial ribosomal protein bL9 family.

Binds to the 23S rRNA. The chain is Large ribosomal subunit protein bL9 from Bradyrhizobium sp. (strain ORS 278).